The sequence spans 251 residues: 3-deoxy-manno-octulosonate cytidylyltransferase (251 aa).

This sequence belongs to the KdsB family.

Its subcellular location is the cytoplasm. The enzyme catalyses 3-deoxy-alpha-D-manno-oct-2-ulosonate + CTP = CMP-3-deoxy-beta-D-manno-octulosonate + diphosphate. It participates in nucleotide-sugar biosynthesis; CMP-3-deoxy-D-manno-octulosonate biosynthesis; CMP-3-deoxy-D-manno-octulosonate from 3-deoxy-D-manno-octulosonate and CTP: step 1/1. Its pathway is bacterial outer membrane biogenesis; lipopolysaccharide biosynthesis. Its function is as follows. Activates KDO (a required 8-carbon sugar) for incorporation into bacterial lipopolysaccharide in Gram-negative bacteria. In Brucella canis (strain ATCC 23365 / NCTC 10854 / RM-666), this protein is 3-deoxy-manno-octulosonate cytidylyltransferase.